The chain runs to 436 residues: Putative actin-fragmin kinase DDB_G0268748 (436 aa).

Positions 14 to 58 are disordered; it reads DKNIDSGSSSSNIGGSSSNSSGTTNKRSSGNFNGSSASSSPSSST. Over residues 18 to 57 the composition is skewed to low complexity; it reads DSGSSSSNIGGSSSNSSGTTNKRSSGNFNGSSASSSPSSS.

Belongs to the protein kinase superfamily. AFK Ser/Thr protein kinase family.

This is Putative actin-fragmin kinase DDB_G0268748 from Dictyostelium discoideum (Social amoeba).